A 120-amino-acid polypeptide reads, in one-letter code: ATP-dependent Clp protease adapter protein ClpS (120 aa).

It belongs to the ClpS family. Binds to the N-terminal domain of the chaperone ClpA.

In terms of biological role, involved in the modulation of the specificity of the ClpAP-mediated ATP-dependent protein degradation. The sequence is that of ATP-dependent Clp protease adapter protein ClpS from Pseudomonas syringae pv. syringae (strain B728a).